We begin with the raw amino-acid sequence, 585 residues long: Protein FAM83D (585 aa).

Residues 1 to 296 form a DUF1669 region; the sequence is MAARFELLDD…LYAQSEPISS (296 aa). Residue Ser295 is modified to Phosphoserine. 2 disordered regions span residues 334-411 and 425-482; these read LSST…TSSS and AASS…SQGS. Residues 337–585 are required for interaction with KIF22 and function in chromosome congression; it reads TPRKSNLGPE…RDIALYPPYQ (249 aa). Composition is skewed to basic and acidic residues over residues 347–360 and 369–383; these read EPPK…RPDS and DYFH…DSKV. Positions 425-441 are enriched in polar residues; that stretch reads AASSQATVWSKSTTTQT. A Phosphoserine modification is found at Ser458. Over residues 458 to 482 the composition is skewed to low complexity; that stretch reads SPASKMSVSRSSSVRSSSSVSSQGS. Thr511 is modified (phosphothreonine).

This sequence belongs to the FAM83 family. As to quaternary structure, interacts with FBXW7; promotes FBXW7 degradation. May interact with RAF1. Interacts with KIF22; recruits KIF22 to mitotic spindle microtubules. Interacts (via C-terminus) with DYNLL1. Interacts with HMMR. Directly interacts (via DUF1669) with CSNK1A1 and CSNK1A1L. Post-translationally, phosphorylated during mitosis.

It is found in the cytoplasm. It localises to the cytoskeleton. The protein resides in the spindle. Its subcellular location is the spindle pole. Its function is as follows. Through the degradation of FBXW7, may act indirectly on the expression and downstream signaling of MTOR, JUN and MYC. May play also a role in cell proliferation through activation of the ERK1/ERK2 signaling cascade. May also be important for proper chromosome congression and alignment during mitosis through its interaction with KIF22. The chain is Protein FAM83D from Mus musculus (Mouse).